The sequence spans 2845 residues: Adenomatous polyposis coli protein (2845 aa).

N-acetylalanine is present on A2. A coiled-coil region spans residues 2–61 (AAASYDQLLKQVEALKMENSNLRQELEDNSNHLTKLETEASNMKEVLKQLQGSIEDETMT). 2 positions are modified to phosphoserine: S105 and S109. Positions 125-245 (SRESTGYLEE…QAAEAERSSQ (121 aa)) form a coiled coil. Residues 238 to 304 (AEAERSSQSR…THSAPRRLTS (67 aa)) form a disordered region. Basic and acidic residues predominate over residues 239–263 (EAERSSQSRHDAASHEAGRQHEGHG). Residues 266-279 (ESNTAASSSGQSPA) show a composition bias toward polar residues. 7 ARM repeats span residues 451–493 (LMKL…HYSV), 503–545 (LTNL…IASV), 546–589 (LRNL…VLSA), 590–636 (LWNL…GGGI), 637–681 (LRNV…ACGT), 682–723 (LWNL…SAAA), and 724–765 (LRNL…LDAQ). Residues S742, S746, and S778 each carry the phosphoserine modification. The disordered stretch occupies residues 828–873 (VLPSSSSSRGSLDSSRSEKDRSLERERGIGLSAYHPTTENAGTSSK). Residues 831–841 (SSSSSRGSLDS) show a composition bias toward low complexity. A compositionally biased stretch (basic and acidic residues) spans 842–855 (SRSEKDRSLERERG). Residues 862-873 (HPTTENAGTSSK) show a composition bias toward polar residues. A Phosphoserine modification is found at S906. Disordered stretches follow at residues 921–942 (RRSSASHTHSNTYNFTKSENSN) and 956–986 (RSSNDSLNSVTSSDGYGKRGQMKPSVESYSE). Polar residues predominate over residues 927 to 942 (HTHSNTYNFTKSENSN). Residues 959–969 (NDSLNSVTSSD) are compositionally biased toward low complexity. Phosphoserine occurs at positions 985, 1036, and 1040. Residues 1018–1168 (ELDTPINYSL…TNYSIKYNEE (151 aa)) form an interaction with catenins region. 4 disordered regions span residues 1058–1079 (IKQNEQRQARSQNTSYPVYSEN), 1092–1168 (GQQE…YNEE), 1189–1247 (SQKP…GTTC), and 1307–1375 (ENDV…PEHY). Composition is skewed to polar residues over residues 1066-1078 (ARSQNTSYPVYSE) and 1103-1128 (RGTSGSETNRMGSSHAINQNVNQSLC). A compositionally biased stretch (low complexity) spans 1189 to 1204 (SQKPSFSFSKNSSAQS). Residues 1211-1245 (SPSSENTAVPPSNAKRQNQLRPSSAQRNGQTQKGT) are compositionally biased toward polar residues. Residues 1354–1365 (SSGAKSPSKSGA) are compositionally biased toward low complexity. S1359, S1370, S1384, S1391, and S1394 each carry phosphoserine. Disordered stretches follow at residues 1400-1474 (IASS…VNAA), 1525-1568 (PPVQ…SDDD), 1587-1606 (RKAKKLAQTASKLPPPVARK), 1746-2010 (DQVQ…APKS), and 2042-2069 (ISSAMPKKKRPSRLKSESEKQSPRKVGG). The residue at position 1437 (T1437) is a Phosphothreonine. A compositionally biased stretch (basic and acidic residues) spans 1447–1465 (AKREVPKSKVPAAEKRESG). Over residues 1532-1546 (NGNETESEQPEESNE) the composition is skewed to acidic residues. A compositionally biased stretch (basic and acidic residues) spans 1547-1562 (NQDKEVEKPDSEKDLL). At S1565 the chain carries Phosphoserine. The segment covering 1747-1762 (QVQQASSTSSGANKNQ) has biased composition (polar residues). At S1772 the chain carries Phosphoserine. Residues 1783-1792 (YRTRVRKNTD) show a composition bias toward basic and acidic residues. 3 positions are modified to phosphoserine: S1859, S1861, and S1862. Residues 1864 to 1891 (DFDDDDVDLSREKAELRKGKESKDSEAK) are highly charged. A compositionally biased stretch (basic and acidic residues) spans 1871 to 1894 (DLSREKAELRKGKESKDSEAKVTC). Over residues 1900–1911 (SSQQAASKSQAS) the composition is skewed to low complexity. Residues 1927-1936 (KQPTFPQSSK) are compositionally biased toward polar residues. Positions 1937-1949 (DGPDRGAATDEKL) are enriched in basic and acidic residues. S1969 and S1971 each carry phosphoserine. A compositionally biased stretch (basic and acidic residues) spans 1979-1990 (NNKESEPIKEAE). An interaction with AXIN1 region spans residues 2034-2058 (EDDLLQECISSAMPKKKRPSRLKSE). S2087, S2092, S2125, S2129, S2130, and S2132 each carry phosphoserine. Disordered stretches follow at residues 2146-2190 (SPFH…GIKG), 2202-2652 (KIRS…PPVS), and 2664-2845 (CPIN…VTSV). At T2151 the chain carries Phosphothreonine. The basic region stretch occupies residues 2167-2674 (ILKPGEKSTL…PINNPRSGRS (508 aa)). Positions 2169-2187 (KPGEKSTLEAKKIESENKG) are enriched in basic and acidic residues. Composition is skewed to polar residues over residues 2203-2223 (IRSNSEISSQMKQPLPTNMPS) and 2257-2272 (ASKSPSEGPGATTSPR). S2260, S2270, and S2283 each carry phosphoserine. Residues 2290-2311 (SQISGSNKGSSRSGSRDSTPSR) show a composition bias toward low complexity. The segment covering 2312-2331 (PTQQPLSRPMQSPGRNSISP) has biased composition (polar residues). Low complexity predominate over residues 2348–2369 (TSSPSTASTKSSGSGKMSYTSP). Residues 2370-2411 (GRQLSQQNLTKQASLSKNASSIPRSESASKGLNQMSNGNGSN) show a composition bias toward polar residues. Composition is skewed to low complexity over residues 2417-2429 (SRMSSTKSSGSES) and 2459-2477 (SASFESLSPSSRPDSPTRS). Phosphoserine occurs at positions 2473 and 2535. The interval 2475 to 2845 (TRSQAQTPVL…HSGSYLVTSV (371 aa)) is interaction with DLG1. Residues 2518-2535 (NDGRPTKRHDIARSHSES) show a composition bias toward basic and acidic residues. The span at 2555 to 2568 (SSSLPRVSTWRRTG) shows a compositional bias: polar residues. S2569 carries the phosphoserine modification. Over residues 2569-2579 (SSSSILSASSE) the composition is skewed to low complexity. Residues 2580–2592 (SSEKAKSEDERHV) are compositionally biased toward basic and acidic residues. The segment covering 2626 to 2638 (ASQSASSGAASGA) has biased composition (low complexity). A compositionally biased stretch (polar residues) spans 2668–2679 (NPRSGRSPTGNT). A phosphoserine mark is found at S2671 and S2674. Residues 2674-2845 (SPTGNTPPVI…HSGSYLVTSV (172 aa)) are interaction with MAPRE1. At T2679 the chain carries Phosphothreonine. Positions 2684–2694 (DSVSEKGSSSI) are enriched in low complexity. The span at 2695-2705 (KDSKDSKDTHG) shows a compositional bias: basic and acidic residues. The segment covering 2706–2716 (KQSVGSGSPVQ) has biased composition (polar residues). Phosphoserine is present on residues S2713 and S2726. Over residues 2765-2776 (SSSSSSKHSSPS) the composition is skewed to low complexity. Polar residues predominate over residues 2786–2814 (FNYNPSPRKSSADSTSARPSQIPTPVSTN). S2791 bears the Phosphoserine mark. The short motif at 2805–2808 (SQIP) is the Microtubule tip localization signal element. The PDZ-binding motif lies at 2843–2845 (TSV).

This sequence belongs to the adenomatous polyposis coli (APC) family. In terms of assembly, forms homooligomers. Found in a complex consisting of ARHGEF4, APC and CTNNB1. Found in a complex composed of MACF1, APC, AXIN1, CTNNB1 and GSK3B. The complex composed, at least, of APC, CTNNB1 and GSK3B interacts with JPT1; the interaction requires the inactive form of GSK3B (phosphorylated at 'Ser-9'). Interacts with APC2. Interacts with DLG1 (via PDZ domains) and DLG3 (via PDZ domains). Interacts with alpha- and beta-catenins. Interacts with AXIN1 (via RGS domain). Interacts with ARHGEF4 (via N-terminus). Interacts (via C-terminal residues 2674-2843) with MAPRE1 (via C-terminal residues 206-211); the interaction inhibits association with and bundling of F-actin. Interacts with MAPRE2 and MAPRE3 (via C-terminus). Interacts with DIAPH1; DIAPH1 acts as a scaffold protein for MAPRE1 and APC to stabilize microtubules and promote cell migration. Interacts with DIAPH2. Interacts with SCRIB; may mediate targeting to adherens junctions of epithelial cells. Interacts with SPATA13 (via N-terminus and SH3 domain). Interacts with ASAP1 (via SH3 domain). Interacts (at the cell membrane) with AMER1 and AMER2 (via ARM repeats). Interacts with KHDRBS1. Interacts with actin; binds both to F-actin and actin filament bundles. Phosphorylated; phosphorylation enhances the F-actin bundling activity. Phosphorylated by GSK3B. Post-translationally, ubiquitinated, leading to its degradation by the proteasome. Ubiquitination is facilitated by Axin. Deubiquitinated by ZRANB1/TRABID. In terms of tissue distribution, expressed in liver, spleen, kidney, heart, lung, brain, stomach, intestine, testis and ovary.

It localises to the cell junction. The protein localises to the adherens junction. The protein resides in the cytoplasm. It is found in the cytoskeleton. Its subcellular location is the cell projection. It localises to the lamellipodium. The protein localises to the ruffle membrane. The protein resides in the cell membrane. Its function is as follows. Tumor suppressor. Promotes rapid degradation of CTNNB1 and participates in Wnt signaling as a negative regulator. APC activity is correlated with its phosphorylation state. Activates the GEF activity of SPATA13 and ARHGEF4. Plays a role in hepatocyte growth factor (HGF)-induced cell migration. Required for MMP9 up-regulation via the JNK signaling pathway in colorectal tumor cells. Associates with both microtubules and actin filaments, components of the cytoskeleton. Plays a role in mediating the organization of F-actin into ordered bundles. Functions downstream of Rho GTPases and DIAPH1 to selectively stabilize microtubules. Acts as a mediator of ERBB2-dependent stabilization of microtubules at the cell cortex. It is required for the localization of MACF1 to the cell membrane and this localization of MACF1 is critical for its function in microtubule stabilization. The polypeptide is Adenomatous polyposis coli protein (Apc) (Mus musculus (Mouse)).